A 94-amino-acid polypeptide reads, in one-letter code: Selenoprotein K (94 aa).

Residues Leu-20–Leu-42 traverse the membrane as a helical segment. Residues Lys-48 to Arg-94 are disordered. Residue Sec-92 is a non-standard amino acid, selenocysteine.

This sequence belongs to the selenoprotein K family. Interacts with DERL1, DERL2, DERL3 and SELENOS. The SELENOK-SELENOS complex interacts with VCP. Interacts with ZDHHC6. In terms of processing, cleaved by CAPN2/m-calpain in resting macrophages but not in activated macrophages. Macrophage activation up-regulates expression of the calpain inhibitor CAST/calpastatin, resulting in inhibition of CAPN2 activity. Truncated SELENOK proteins produced by failed UGA/Sec decoding are ubiquitinated by the CRL2(KLHDC2) complex, which recognizes the diglycine (Gly-Gly) at the C-terminus of truncated SELENOK proteins.

The protein localises to the endoplasmic reticulum membrane. It is found in the cell membrane. Its function is as follows. Required for Ca(2+) flux in immune cells and plays a role in T-cell proliferation and in T-cell and neutrophil migration. Involved in endoplasmic reticulum-associated degradation (ERAD) of soluble glycosylated proteins. Required for palmitoylation and cell surface expression of CD36 and involved in macrophage uptake of low-density lipoprotein and in foam cell formation. Together with ZDHHC6, required for palmitoylation of ITPR1 in immune cells, leading to regulate ITPR1 stability and function. Plays a role in protection of cells from ER stress-induced apoptosis. Protects cells from oxidative stress when overexpressed in cardiomyocytes. This Rattus norvegicus (Rat) protein is Selenoprotein K.